A 581-amino-acid polypeptide reads, in one-letter code: 4-hydroxy-3-methylbut-2-en-1-yl diphosphate synthase (flavodoxin) (581 aa).

[4Fe-4S] cluster contacts are provided by Cys489, Cys492, Cys523, and Glu530.

Belongs to the IspG family. It depends on [4Fe-4S] cluster as a cofactor.

It carries out the reaction (2E)-4-hydroxy-3-methylbut-2-enyl diphosphate + oxidized [flavodoxin] + H2O + 2 H(+) = 2-C-methyl-D-erythritol 2,4-cyclic diphosphate + reduced [flavodoxin]. It functions in the pathway isoprenoid biosynthesis; isopentenyl diphosphate biosynthesis via DXP pathway; isopentenyl diphosphate from 1-deoxy-D-xylulose 5-phosphate: step 5/6. In terms of biological role, converts 2C-methyl-D-erythritol 2,4-cyclodiphosphate (ME-2,4cPP) into 1-hydroxy-2-methyl-2-(E)-butenyl 4-diphosphate. The protein is 4-hydroxy-3-methylbut-2-en-1-yl diphosphate synthase (flavodoxin) of Porphyromonas gingivalis (strain ATCC BAA-308 / W83).